A 205-amino-acid chain; its full sequence is Thymidine kinase (205 aa).

ATP contacts are provided by residues S9–S16 and D87–Q90. The active-site Proton acceptor is E88. The Zn(2+) site is built by C145, C147, C182, and H185.

The protein belongs to the thymidine kinase family. As to quaternary structure, homotetramer.

The protein resides in the cytoplasm. It catalyses the reaction thymidine + ATP = dTMP + ADP + H(+). The polypeptide is Thymidine kinase (Salmonella choleraesuis (strain SC-B67)).